Here is a 279-residue protein sequence, read N- to C-terminus: Proto-oncogene FRAT1 (279 aa).

Disordered stretches follow at residues 1–24 (MPCR…EEDS) and 56–76 (AQHS…APGP). The segment covering 7–24 (EEEEAGEEAEGEEEEEDS) has biased composition (acidic residues). Phosphoserine is present on Ser-88. Disordered regions lie at residues 136 to 200 (GPSA…DDPH) and 228 to 279 (RAKL…VPGS). Positions 198 to 220 (DPHRLLQQLVLSGNLIKEAVRRL) are involved in GSK-3 binding. A phosphoserine mark is found at Ser-249 and Ser-252.

This sequence belongs to the GSK-3-binding protein family. In terms of assembly, binds DVL1. Binds GSK-3 and prevent GSK-3-dependent phosphorylation. Post-translationally, phosphorylated.

The protein localises to the cytoplasm. Positively regulates the Wnt signaling pathway by stabilizing beta-catenin through the association with GSK-3. May play a role in tumor progression and collaborate with PIM1 and MYC in lymphomagenesis. In Homo sapiens (Human), this protein is Proto-oncogene FRAT1 (FRAT1).